Consider the following 494-residue polypeptide: Glutamyl-tRNA(Gln) amidotransferase subunit A (494 aa).

Catalysis depends on charge relay system residues lysine 81 and serine 156. Serine 180 serves as the catalytic Acyl-ester intermediate.

The protein belongs to the amidase family. GatA subfamily. In terms of assembly, heterotrimer of A, B and C subunits.

The enzyme catalyses L-glutamyl-tRNA(Gln) + L-glutamine + ATP + H2O = L-glutaminyl-tRNA(Gln) + L-glutamate + ADP + phosphate + H(+). In terms of biological role, allows the formation of correctly charged Gln-tRNA(Gln) through the transamidation of misacylated Glu-tRNA(Gln) in organisms which lack glutaminyl-tRNA synthetase. The reaction takes place in the presence of glutamine and ATP through an activated gamma-phospho-Glu-tRNA(Gln). The sequence is that of Glutamyl-tRNA(Gln) amidotransferase subunit A from Mycobacterium bovis (strain ATCC BAA-935 / AF2122/97).